The chain runs to 449 residues: D-inositol 3-phosphate glycosyltransferase (449 aa).

Residue His-43 participates in 1D-myo-inositol 3-phosphate binding. UDP-N-acetyl-alpha-D-glucosamine contacts are provided by residues 49 to 50 (QP) and Gly-57. Residues 54 to 59 (DAGGMN), Lys-112, Tyr-145, Thr-169, and Arg-189 contribute to the 1D-myo-inositol 3-phosphate site. Residues Arg-263, Lys-268, and Gln-324 each contribute to the UDP-N-acetyl-alpha-D-glucosamine site. Mg(2+)-binding residues include Tyr-333, Arg-334, and Ala-336. Residues Glu-346 and Glu-354 each contribute to the UDP-N-acetyl-alpha-D-glucosamine site. Thr-360 contributes to the Mg(2+) binding site.

It belongs to the glycosyltransferase group 1 family. MshA subfamily. In terms of assembly, homodimer.

It catalyses the reaction 1D-myo-inositol 3-phosphate + UDP-N-acetyl-alpha-D-glucosamine = 1D-myo-inositol 2-acetamido-2-deoxy-alpha-D-glucopyranoside 3-phosphate + UDP + H(+). Its function is as follows. Catalyzes the transfer of a N-acetyl-glucosamine moiety to 1D-myo-inositol 3-phosphate to produce 1D-myo-inositol 2-acetamido-2-deoxy-glucopyranoside 3-phosphate in the mycothiol biosynthesis pathway. This chain is D-inositol 3-phosphate glycosyltransferase, found in Segniliparus rotundus (strain ATCC BAA-972 / CDC 1076 / CIP 108378 / DSM 44985 / JCM 13578).